A 480-amino-acid chain; its full sequence is Ribulose bisphosphate carboxylase large chain (480 aa).

Positions 1-2 (MS) are excised as a propeptide. The residue at position 3 (Pro-3) is an N-acetylproline. Lys-14 is subject to N6,N6,N6-trimethyllysine. Residues Asn-123 and Thr-173 each contribute to the substrate site. The Proton acceptor role is filled by Lys-175. Lys-177 contacts substrate. 3 residues coordinate Mg(2+): Lys-201, Asp-203, and Glu-204. N6-carboxylysine is present on Lys-201. His-294 (proton acceptor) is an active-site residue. Positions 295, 327, and 379 each coordinate substrate.

Belongs to the RuBisCO large chain family. Type I subfamily. Heterohexadecamer of 8 large chains and 8 small chains; disulfide-linked. The disulfide link is formed within the large subunit homodimers. It depends on Mg(2+) as a cofactor. Post-translationally, the disulfide bond which can form in the large chain dimeric partners within the hexadecamer appears to be associated with oxidative stress and protein turnover.

The protein resides in the plastid. The protein localises to the chloroplast. The enzyme catalyses 2 (2R)-3-phosphoglycerate + 2 H(+) = D-ribulose 1,5-bisphosphate + CO2 + H2O. The catalysed reaction is D-ribulose 1,5-bisphosphate + O2 = 2-phosphoglycolate + (2R)-3-phosphoglycerate + 2 H(+). In terms of biological role, ruBisCO catalyzes two reactions: the carboxylation of D-ribulose 1,5-bisphosphate, the primary event in carbon dioxide fixation, as well as the oxidative fragmentation of the pentose substrate in the photorespiration process. Both reactions occur simultaneously and in competition at the same active site. The polypeptide is Ribulose bisphosphate carboxylase large chain (Basella alba (Malabar spinach)).